The primary structure comprises 121 residues: Small ribosomal subunit protein uS13 (121 aa).

Positions 94–121 (GLPVRGQNTKNNSRTRKGPRRTVANKKK) are disordered. Residues 106 to 121 (SRTRKGPRRTVANKKK) show a composition bias toward basic residues.

It belongs to the universal ribosomal protein uS13 family. As to quaternary structure, part of the 30S ribosomal subunit. Forms a loose heterodimer with protein S19. Forms two bridges to the 50S subunit in the 70S ribosome.

Its function is as follows. Located at the top of the head of the 30S subunit, it contacts several helices of the 16S rRNA. In the 70S ribosome it contacts the 23S rRNA (bridge B1a) and protein L5 of the 50S subunit (bridge B1b), connecting the 2 subunits; these bridges are implicated in subunit movement. Contacts the tRNAs in the A and P-sites. This chain is Small ribosomal subunit protein uS13, found in Exiguobacterium sibiricum (strain DSM 17290 / CCUG 55495 / CIP 109462 / JCM 13490 / 255-15).